A 236-amino-acid chain; its full sequence is Lipid A 4'-phosphatase (236 aa).

Transmembrane regions (helical) follow at residues 26–46 (FFYL…FLFF), 58–78 (FIVG…SSFF), 134–153 (YTWT…IYIG), 160–182 (IIPG…LYAR), and 200–220 (GDSI…MLCM).

This sequence belongs to the lipid A LpxF 4'-phosphatase family.

It localises to the cell inner membrane. It functions in the pathway bacterial outer membrane biogenesis; LPS lipid A biosynthesis. Removes the 4'-phosphate group from lipid A species. Absence of phosphate groups in lipid A renders the bacteria resistant to host-derived cationic antimicrobial peptides (CAMP) and allows it to camouflage itself from the host innate immune response. Removal of the 4'-phosphate may be required to generate the substrate for deacylation of the pentaacyl lipid A to the tetraccylated lipid A species. The chain is Lipid A 4'-phosphatase from Porphyromonas gingivalis (strain ATCC 33277 / DSM 20709 / CIP 103683 / JCM 12257 / NCTC 11834 / 2561).